The sequence spans 138 residues: Vesicle transport protein GOT1B (138 aa).

M1 carries the post-translational modification N-acetylmethionine. The Cytoplasmic portion of the chain corresponds to M1 to K9. A helical transmembrane segment spans residues I10–F30. At D31 to K32 the chain is on the lumenal side. Residues A33–E53 traverse the membrane as a helical segment. The Cytoplasmic portion of the chain corresponds to R54–T68. Residue E90 is a topological domain, lumenal. Residues I91 to I109 traverse the membrane as a helical segment. Over R110–V138 the chain is Cytoplasmic.

This sequence belongs to the GOT1 family.

The protein localises to the golgi apparatus membrane. May be involved in fusion of ER-derived transport vesicles with the Golgi complex. The sequence is that of Vesicle transport protein GOT1B (Golt1b) from Mus musculus (Mouse).